The primary structure comprises 1170 residues: Error-prone DNA polymerase (1170 aa).

Disordered regions lie at residues 867-899 and 1129-1170; these read RGARSANPESRDSGFALRAPRNDNDRQIPLHND and IPHG…RDFH. Residues 886-899 are compositionally biased toward basic and acidic residues; that stretch reads PRNDNDRQIPLHND.

It belongs to the DNA polymerase type-C family. DnaE2 subfamily.

The protein localises to the cytoplasm. It catalyses the reaction DNA(n) + a 2'-deoxyribonucleoside 5'-triphosphate = DNA(n+1) + diphosphate. In terms of biological role, DNA polymerase involved in damage-induced mutagenesis and translesion synthesis (TLS). It is not the major replicative DNA polymerase. This is Error-prone DNA polymerase from Bradyrhizobium sp. (strain ORS 278).